A 93-amino-acid chain; its full sequence is Protein FMP16, mitochondrial (93 aa).

Residues 1–25 (MLRTTFLRTPRQLMRKSPRASFSIV) constitute a mitochondrion transit peptide. The tract at residues 30–93 (FPHLKNNQDE…EQNRPDDGVY (64 aa)) is disordered. Residues 35–93 (NNQDEAEKKEQGLFDSNKKRLDTLEHGKNPDYKQPGMEDLKKKGDDARIEQNRPDDGVY) are compositionally biased toward basic and acidic residues.

The protein localises to the mitochondrion. The polypeptide is Protein FMP16, mitochondrial (FMP16) (Saccharomyces cerevisiae (strain ATCC 204508 / S288c) (Baker's yeast)).